Consider the following 319-residue polypeptide: Acetyl-coenzyme A carboxylase carboxyl transferase subunit alpha (319 aa).

Residues 39–293 (KLEKKVDRMR…HEAIARQLKE (255 aa)) enclose the CoA carboxyltransferase C-terminal domain.

The protein belongs to the AccA family. As to quaternary structure, acetyl-CoA carboxylase is a heterohexamer composed of biotin carboxyl carrier protein (AccB), biotin carboxylase (AccC) and two subunits each of ACCase subunit alpha (AccA) and ACCase subunit beta (AccD).

Its subcellular location is the cytoplasm. It carries out the reaction N(6)-carboxybiotinyl-L-lysyl-[protein] + acetyl-CoA = N(6)-biotinyl-L-lysyl-[protein] + malonyl-CoA. It functions in the pathway lipid metabolism; malonyl-CoA biosynthesis; malonyl-CoA from acetyl-CoA: step 1/1. Functionally, component of the acetyl coenzyme A carboxylase (ACC) complex. First, biotin carboxylase catalyzes the carboxylation of biotin on its carrier protein (BCCP) and then the CO(2) group is transferred by the carboxyltransferase to acetyl-CoA to form malonyl-CoA. The polypeptide is Acetyl-coenzyme A carboxylase carboxyl transferase subunit alpha (Geobacter sulfurreducens (strain ATCC 51573 / DSM 12127 / PCA)).